Reading from the N-terminus, the 219-residue chain is Protein DCL homolog, chloroplastic (219 aa).

Residues 1–48 constitute a chloroplast transit peptide; the sequence is MSLASIPSSSPVASPYFRCRTYIFSFSSSPLCLYFPRGDSTSLRPRVR. A disordered region spans residues 70 to 96; the sequence is LRRPRIASEESSEEEEEEEEENSEGDE. Residues 79–96 show a composition bias toward acidic residues; that stretch reads ESSEEEEEEEEENSEGDE.

In terms of tissue distribution, expressed in leaves, stems, flowers and siliques.

The protein resides in the plastid. Its subcellular location is the chloroplast. Its function is as follows. Required for normal plastid function and plant development. Required for correct plastid ribosome assembly. Required for processing and maturation of 4.5S rRNA. This chain is Protein DCL homolog, chloroplastic, found in Arabidopsis thaliana (Mouse-ear cress).